Here is a 1178-residue protein sequence, read N- to C-terminus: Phosphate system positive regulatory protein PHO81 (1178 aa).

Residues 1 to 169 (MKFGKYLEAR…QSHDKDFYLA (169 aa)) enclose the SPX domain. Residues 210–250 (QSSTFTNDDDDDNNTSNNNKHNNNNNNNNNNNNNNNNNNIL) form a disordered region. Positions 223-250 (NTSNNNKHNNNNNNNNNNNNNNNNNNIL) are enriched in low complexity. ANK repeat units lie at residues 423-452 (HSRV…LEDV), 458-487 (DSKT…ANAS), 506-535 (VQFD…KQNA), 556-586 (TGLC…DPNE), 591-620 (NKWT…RLDI), and 624-653 (NGHS…NLPS). The 308-residue stretch at 871–1178 (IINYEPYWKS…ELLFENNIDM (308 aa)) folds into the GP-PDE domain. Phosphoserine is present on Ser-956.

Associates specifically with the PHO80-PHO85 and PCL7-PHO85 cyclin-CDK complexes, and much of this interaction is mediated through the PHO80 and PCL7 cyclin subunits. Interacts with the transcription factor PHO4. Post-translationally, phosphorylated by the cyclin-CDK PHO80-PHO85. Phosphorylation mediates the formation of a stable interaction with the cyclin-CDK and is required for function as an active inhibitor of the complex under phosphate starvation conditions.

The protein localises to the cytoplasm. Its subcellular location is the nucleus. Functionally, inhibits the kinase activity of the cyclin-CDKs PHO80-PHO85 and PCL7-PHO85 under low-phosphate conditions. This is Phosphate system positive regulatory protein PHO81 (PHO81) from Saccharomyces cerevisiae (strain ATCC 204508 / S288c) (Baker's yeast).